The primary structure comprises 421 residues: Serine hydroxymethyltransferase (421 aa).

(6S)-5,6,7,8-tetrahydrofolate contacts are provided by residues Leu-121 and Gly-125 to Leu-127. The residue at position 229 (Lys-229) is an N6-(pyridoxal phosphate)lysine.

The protein belongs to the SHMT family. As to quaternary structure, homodimer. It depends on pyridoxal 5'-phosphate as a cofactor.

The protein localises to the cytoplasm. The enzyme catalyses (6R)-5,10-methylene-5,6,7,8-tetrahydrofolate + glycine + H2O = (6S)-5,6,7,8-tetrahydrofolate + L-serine. It functions in the pathway one-carbon metabolism; tetrahydrofolate interconversion. Its pathway is amino-acid biosynthesis; glycine biosynthesis; glycine from L-serine: step 1/1. Its function is as follows. Catalyzes the reversible interconversion of serine and glycine with tetrahydrofolate (THF) serving as the one-carbon carrier. This reaction serves as the major source of one-carbon groups required for the biosynthesis of purines, thymidylate, methionine, and other important biomolecules. Also exhibits THF-independent aldolase activity toward beta-hydroxyamino acids, producing glycine and aldehydes, via a retro-aldol mechanism. The protein is Serine hydroxymethyltransferase of Haemophilus influenzae (strain ATCC 51907 / DSM 11121 / KW20 / Rd).